A 299-amino-acid chain; its full sequence is HTH-type transcriptional regulator ArgP (299 aa).

One can recognise an HTH lysR-type domain in the interval proline 4–threonine 60. Positions phenylalanine 21–lysine 40 form a DNA-binding region, H-T-H motif.

It belongs to the LysR transcriptional regulatory family. In terms of assembly, homodimer.

Controls the transcription of genes involved in arginine and lysine metabolism. In Erwinia tasmaniensis (strain DSM 17950 / CFBP 7177 / CIP 109463 / NCPPB 4357 / Et1/99), this protein is HTH-type transcriptional regulator ArgP.